We begin with the raw amino-acid sequence, 161 residues long: SsrA-binding protein (161 aa).

This sequence belongs to the SmpB family.

The protein localises to the cytoplasm. Required for rescue of stalled ribosomes mediated by trans-translation. Binds to transfer-messenger RNA (tmRNA), required for stable association of tmRNA with ribosomes. tmRNA and SmpB together mimic tRNA shape, replacing the anticodon stem-loop with SmpB. tmRNA is encoded by the ssrA gene; the 2 termini fold to resemble tRNA(Ala) and it encodes a 'tag peptide', a short internal open reading frame. During trans-translation Ala-aminoacylated tmRNA acts like a tRNA, entering the A-site of stalled ribosomes, displacing the stalled mRNA. The ribosome then switches to translate the ORF on the tmRNA; the nascent peptide is terminated with the 'tag peptide' encoded by the tmRNA and targeted for degradation. The ribosome is freed to recommence translation, which seems to be the essential function of trans-translation. This chain is SsrA-binding protein, found in Vibrio campbellii (strain ATCC BAA-1116).